Here is a 155-residue protein sequence, read N- to C-terminus: Ribosome maturation factor RimP (155 aa).

The protein belongs to the RimP family.

The protein resides in the cytoplasm. Required for maturation of 30S ribosomal subunits. The chain is Ribosome maturation factor RimP from Bacteroides fragilis (strain ATCC 25285 / DSM 2151 / CCUG 4856 / JCM 11019 / LMG 10263 / NCTC 9343 / Onslow / VPI 2553 / EN-2).